Consider the following 72-residue polypeptide: Translation initiation factor IF-1 (72 aa).

One can recognise an S1-like domain in the interval 1–72; it reads MAKDDVIEIQ…TKGRITYRFK (72 aa).

This sequence belongs to the IF-1 family. Component of the 30S ribosomal translation pre-initiation complex which assembles on the 30S ribosome in the order IF-2 and IF-3, IF-1 and N-formylmethionyl-tRNA(fMet); mRNA recruitment can occur at any time during PIC assembly.

Its subcellular location is the cytoplasm. Its function is as follows. One of the essential components for the initiation of protein synthesis. Stabilizes the binding of IF-2 and IF-3 on the 30S subunit to which N-formylmethionyl-tRNA(fMet) subsequently binds. Helps modulate mRNA selection, yielding the 30S pre-initiation complex (PIC). Upon addition of the 50S ribosomal subunit IF-1, IF-2 and IF-3 are released leaving the mature 70S translation initiation complex. This is Translation initiation factor IF-1 from Lacticaseibacillus paracasei (strain ATCC 334 / BCRC 17002 / CCUG 31169 / CIP 107868 / KCTC 3260 / NRRL B-441) (Lactobacillus paracasei).